Reading from the N-terminus, the 217-residue chain is Probable GTP-binding protein EngB (217 aa).

Residues 33-217 (GPTEIAFAGR…RAAIELAVTR (185 aa)) form the EngB-type G domain. Residues 41-48 (GRSNVGKS), 68-72 (GRTQE), 95-98 (DMPG), 162-165 (TKTD), and 196-198 (TSS) each bind GTP. Positions 48 and 70 each coordinate Mg(2+).

It belongs to the TRAFAC class TrmE-Era-EngA-EngB-Septin-like GTPase superfamily. EngB GTPase family. Requires Mg(2+) as cofactor.

Necessary for normal cell division and for the maintenance of normal septation. In Rhizobium meliloti (strain 1021) (Ensifer meliloti), this protein is Probable GTP-binding protein EngB.